We begin with the raw amino-acid sequence, 197 residues long: Probable nicotinate-nucleotide adenylyltransferase (197 aa).

It belongs to the NadD family.

The enzyme catalyses nicotinate beta-D-ribonucleotide + ATP + H(+) = deamido-NAD(+) + diphosphate. The protein operates within cofactor biosynthesis; NAD(+) biosynthesis; deamido-NAD(+) from nicotinate D-ribonucleotide: step 1/1. Catalyzes the reversible adenylation of nicotinate mononucleotide (NaMN) to nicotinic acid adenine dinucleotide (NaAD). This chain is Probable nicotinate-nucleotide adenylyltransferase, found in Thermosipho melanesiensis (strain DSM 12029 / CIP 104789 / BI429).